The primary structure comprises 304 residues: Acetylglutamate kinase (304 aa).

Substrate is bound by residues 71–72, R93, and N193; that span reads GG.

It belongs to the acetylglutamate kinase family. ArgB subfamily.

The protein resides in the cytoplasm. The catalysed reaction is N-acetyl-L-glutamate + ATP = N-acetyl-L-glutamyl 5-phosphate + ADP. It participates in amino-acid biosynthesis; L-arginine biosynthesis; N(2)-acetyl-L-ornithine from L-glutamate: step 2/4. Catalyzes the ATP-dependent phosphorylation of N-acetyl-L-glutamate. This Streptomyces avermitilis (strain ATCC 31267 / DSM 46492 / JCM 5070 / NBRC 14893 / NCIMB 12804 / NRRL 8165 / MA-4680) protein is Acetylglutamate kinase.